Here is a 461-residue protein sequence, read N- to C-terminus: MLELRHRGGCPGPGGAGAPPPREGEAAGGDHETESTSDKETDIDDRYGDLDARGDSDVPEVPPSSDRTPEILKKALSGLSSRWKNWWIRGILTLTMISLFFLIIYMGSFMLMLLVLGIQVKCFHEIITIGYRVYHSYDLPWFRTLSWYFLLCVNYFFYGETVADYFATFVQREEQLQFLIRYHRFISFALYLAGFCMFVLSLVKKHYRLQFYMFAWTHVTLLITVTQSHLVIQNLFEGMIWFLVPISSVICNDITAYLFGFFFGRTPLIKLSPKKTWEGFIGGFFSTVIFGFIAAYVLSKYQYFVCPVEYRSDVNSFVTECEPSELFQLQNYSLPPFLQAVLSRETVSLYPFQIHSIALSTFASLIGPFGGFFASGFKRAFKIKDFANTIPGHGGIMDRFDCQYLMATFVHVYITSFIRGPNPSKVLQQLLVLQPEQQLNIYRTLKIHLTEKGILQPTLKV.

A disordered region spans residues 1 to 68; sequence MLELRHRGGC…PEVPPSSDRT (68 aa). Position 7 is an omega-N-methylarginine (R7). Residues 22–56 are compositionally biased toward basic and acidic residues; that stretch reads REGEAAGGDHETESTSDKETDIDDRYGDLDARGDS. 2 positions are modified to phosphoserine: S35 and S37. A run of 6 helical transmembrane segments spans residues 96 to 116, 149 to 169, 183 to 203, 230 to 250, 279 to 299, and 357 to 377; these read MISLFFLIIYMGSFMLMLLVL, FLLCVNYFFYGETVADYFATF, HRFISFALYLAGFCMFVLSLV, LVIQNLFEGMIWFLVPISSVI, GFIGGFFSTVIFGFIAAYVLS, and IALSTFASLIGPFGGFFASGF.

This sequence belongs to the CDS family. Homodimer. Interacts with FOS; this interaction may enhance catalytic activity. It depends on Mg(2+) as a cofactor. As to expression, expressed in adult brain, eye, smooth muscle and testis. Highly expressed in the inner segment of the photoreceptor layer of adult retina.

It localises to the endoplasmic reticulum membrane. The enzyme catalyses a 1,2-diacyl-sn-glycero-3-phosphate + CTP + H(+) = a CDP-1,2-diacyl-sn-glycerol + diphosphate. It carries out the reaction 1-octadecanoyl-2-(5Z,8Z,11Z,14Z-eicosatetraenoyl)-sn-glycero-3-phosphate + CTP + H(+) = 1-octadecanoyl-2-(5Z,8Z,11Z,14Z-eicosatetraenoyl)-sn-glycero-3-cytidine-5'-diphosphate + diphosphate. The catalysed reaction is 1-octadecanoyl-2-(9Z,12Z-octadecadienoyl)-sn-glycero-3-phosphate + CTP + H(+) = 1-octadecanoyl-2-(9Z,12Z-octadecadienoyl)-sn-glycero-3-cytidine-5'-diphosphate + diphosphate. It catalyses the reaction 1-hexadecanoyl-2-(5Z,8Z,11Z,14Z-eicosatetraenoyl)-sn-glycero-3-phosphate + CTP + H(+) = 1-hexadecanoyl-2-(5Z,8Z,11Z,14Z-eicosatetraenoyl)-sn-glycero-3-cytidine-5'-diphosphate + diphosphate. The enzyme catalyses 1,2-di-(5Z,8Z,11Z,14Z)-eicosatetraenoyl-sn-glycero-3-phosphate + CTP + H(+) = 1,2-di-(5Z,8Z,11Z,14Z-eicosatetraenoyl)-sn-glycero-3-cytidine-5'-diphosphate + diphosphate. It carries out the reaction 1-octadecanoyl-2-(9Z-octadecenoyl)-sn-glycero-3-phosphate + CTP + H(+) = 1-octadecanoyl-2-(9Z-octadecenoyl)-sn-glycero-3-cytidine-5'-diphosphate + diphosphate. The catalysed reaction is 1-octadecanoyl-2-(4Z,7Z,10Z,13Z,16Z,19Z-docosahexaenoyl)-sn-glycero-3-phosphate + CTP + H(+) = 1-octadecanoyl-2-(4Z,7Z,10Z,13Z,16Z,19Z-docosahexaenoyl)-sn-glycero-3-cytidine-5'-diphosphate + diphosphate. It catalyses the reaction 1,2-di-(9Z,12Z-octadecadienoyl)-sn-glycero-3-phosphate + CTP + H(+) = 1,2-di-(9Z,12Z-octadecadienoyl)-sn-glycero-3-cytidine-5'-diphosphate + diphosphate. The enzyme catalyses 1,2-di-(9Z-octadecenoyl)-sn-glycero-3-phosphate + CTP + H(+) = 1,2-di-(9Z-octadecenoyl)-sn-glycero-3-cytidine-5'-diphosphate + diphosphate. It participates in phospholipid metabolism; CDP-diacylglycerol biosynthesis; CDP-diacylglycerol from sn-glycerol 3-phosphate: step 3/3. Its function is as follows. Catalyzes the conversion of phosphatidic acid (PA) to CDP-diacylglycerol (CDP-DAG), an essential intermediate in the synthesis of phosphatidylglycerol, cardiolipin and phosphatidylinositol. Exhibits almost no acyl chain preference for PA, showing no discrimination for the sn-1/sn-2 acyl chain composition of PAs. Plays an important role in regulating the growth of lipid droplets which are storage organelles at the center of lipid and energy homeostasis. Positively regulates the differentiation and development of adipocytes. This is Phosphatidate cytidylyltransferase 1 from Mus musculus (Mouse).